Reading from the N-terminus, the 240-residue chain is Putative S-adenosylmethionine-dependent methyltransferase RcsF (240 aa).

Residues 5–142 (ISPIGHVRSC…YVPYADIVPD (138 aa)) enclose the TsaA-like domain. S-adenosyl-L-methionine is bound by residues 22–24 (PRQ), 63–64 (HQ), R91, and 122–125 (LDGT).

Belongs to the tRNA methyltransferase O family.

The polypeptide is Putative S-adenosylmethionine-dependent methyltransferase RcsF (rcsF) (Pseudomonas aeruginosa).